A 441-amino-acid polypeptide reads, in one-letter code: Xaa-Pro dipeptidase (441 aa).

Mn(2+)-binding residues include aspartate 244, aspartate 255, histidine 336, glutamate 381, and glutamate 420.

This sequence belongs to the peptidase M24B family. Bacterial-type prolidase subfamily. The cofactor is Mn(2+).

The catalysed reaction is Xaa-L-Pro dipeptide + H2O = an L-alpha-amino acid + L-proline. Splits dipeptides with a prolyl residue in the C-terminal position. This Xanthomonas campestris pv. campestris (strain B100) protein is Xaa-Pro dipeptidase.